The chain runs to 494 residues: Cytochrome P450 71D94 (494 aa).

Residues 1-21 (MELNLLLVIIILVATYTVSLL) form a helical; Signal-anchor for type II membrane protein membrane-spanning segment. C434 lines the heme pocket.

The protein belongs to the cytochrome P450 family. Heme serves as cofactor.

The protein localises to the endoplasmic reticulum membrane. In terms of biological role, cytochrome P450 oxygenase of undefined substrate. Not active with limonene, (+)- or (-)-piperitone, (-)-isopiperitone, piperitenone or (+)-pulegone. In Mentha gracilis (Gingermint), this protein is Cytochrome P450 71D94 (CYP71D94).